We begin with the raw amino-acid sequence, 538 residues long: ATP-dependent rRNA helicase RRP3 (538 aa).

Over residues 1–11 (MSSAKRVKLSH) the composition is skewed to basic residues. The interval 1–112 (MSSAKRVKLS…SKEETPTKSF (112 aa)) is disordered. Low complexity predominate over residues 34–47 (KKITQAPKAAAPIK). The span at 53–85 (AEEDDDDDDKDDKDEEDEEQNDDSSDEASENDD) shows a compositional bias: acidic residues. A compositionally biased stretch (basic and acidic residues) spans 92–112 (EATKEGQTELPSKEETPTKSF). The Q motif signature appears at 110 to 138 (KSFRDLGIVEPLCEACEALKFKKPTPIQE). The Helicase ATP-binding domain occupies 141-312 (IPLALQGRDV…RASLRDPLKV (172 aa)). Residue 154 to 161 (AETGSGKT) coordinates ATP. The DEAD box motif lies at 260–263 (DEAD). Positions 336–486 (HKDVYLIYLA…LFQPDKEEVM (151 aa)) constitute a Helicase C-terminal domain. The span at 498 to 512 (HAREEMKALHEDRGK) shows a compositional bias: basic and acidic residues. The interval 498–538 (HAREEMKALHEDRGKKGAVLKGRKRGSATKRRHDDMDAEEG) is disordered. Basic residues predominate over residues 513–528 (KGAVLKGRKRGSATKR).

The protein belongs to the DEAD box helicase family. DDX47/RRP3 subfamily. In terms of assembly, interacts with the SSU processome.

It localises to the nucleus. It carries out the reaction ATP + H2O = ADP + phosphate + H(+). Functionally, ATP-dependent rRNA helicase required for pre-ribosomal RNA processing. Involved in the maturation of the 35S-pre-rRNA and to its cleavage to mature 18S rRNA. This Pyricularia oryzae (strain 70-15 / ATCC MYA-4617 / FGSC 8958) (Rice blast fungus) protein is ATP-dependent rRNA helicase RRP3.